A 393-amino-acid polypeptide reads, in one-letter code: Protein TsgA (393 aa).

The next 12 membrane-spanning stretches (helical) occupy residues 11-31 (WISF…GMVM), 51-71 (FLNA…EIVP), 78-98 (FGFL…SLAL), 101-121 (AAMF…TFLV), 134-154 (LLFT…IAAF), 162-182 (WYWV…LTFG), 206-226 (IGVL…LGFI), 245-265 (TLVS…SFIL), 273-293 (ILTV…TGTP), 297-317 (AWSI…IITL), 332-352 (FVLT…GPIV), and 361-381 (LLTA…LGFV).

Belongs to the major facilitator superfamily. TsgA family.

It localises to the cell inner membrane. The protein is Protein TsgA of Escherichia coli O139:H28 (strain E24377A / ETEC).